The primary structure comprises 286 residues: Bifunctional protein FolD 2 (286 aa).

NADP(+)-binding positions include 165–167 (GRG), T192, and I233.

It belongs to the tetrahydrofolate dehydrogenase/cyclohydrolase family. As to quaternary structure, homodimer.

It catalyses the reaction (6R)-5,10-methylene-5,6,7,8-tetrahydrofolate + NADP(+) = (6R)-5,10-methenyltetrahydrofolate + NADPH. It carries out the reaction (6R)-5,10-methenyltetrahydrofolate + H2O = (6R)-10-formyltetrahydrofolate + H(+). The protein operates within one-carbon metabolism; tetrahydrofolate interconversion. Catalyzes the oxidation of 5,10-methylenetetrahydrofolate to 5,10-methenyltetrahydrofolate and then the hydrolysis of 5,10-methenyltetrahydrofolate to 10-formyltetrahydrofolate. The protein is Bifunctional protein FolD 2 of Salinispora tropica (strain ATCC BAA-916 / DSM 44818 / JCM 13857 / NBRC 105044 / CNB-440).